The chain runs to 196 residues: RNA annealing protein YRA2 (196 aa).

Disordered stretches follow at residues 1–63 (MSVD…PTHQ) and 143–196 (DSTR…MNGN). The 75-residue stretch at 63 to 137 (QRVRFLNIPL…AKITVEIFEQ (75 aa)) folds into the RRM domain. Over residues 149-159 (RSTDHVEKEAG) the composition is skewed to basic and acidic residues.

Belongs to the YRA1 family. Associates with mRNPs.

It is found in the nucleus. In terms of biological role, involved in export of poly(A) mRNAs from the nucleus. Recruited to the coding sequences as well as poly-A sites of active genes. This chain is RNA annealing protein YRA2 (YRA2), found in Eremothecium gossypii (strain ATCC 10895 / CBS 109.51 / FGSC 9923 / NRRL Y-1056) (Yeast).